A 131-amino-acid polypeptide reads, in one-letter code: ATP synthase epsilon chain (131 aa).

The protein belongs to the ATPase epsilon chain family. F-type ATPases have 2 components, CF(1) - the catalytic core - and CF(0) - the membrane proton channel. CF(1) has five subunits: alpha(3), beta(3), gamma(1), delta(1), epsilon(1). CF(0) has three main subunits: a, b and c.

The protein localises to the cell inner membrane. In terms of biological role, produces ATP from ADP in the presence of a proton gradient across the membrane. This chain is ATP synthase epsilon chain, found in Wolinella succinogenes (strain ATCC 29543 / DSM 1740 / CCUG 13145 / JCM 31913 / LMG 7466 / NCTC 11488 / FDC 602W) (Vibrio succinogenes).